Consider the following 406-residue polypeptide: MARRIVVESYPYPRVEDLQVELVERKGLGHPDTICDAAAEAVSRELSKYYLERFGKILHHNVDKVLLVGGQAAPRLGGGEVLQPIYILVSGRVTTEVRTGGGVESVPVGPIILRAVKNYIRENFRFLDPEEHVIVDYRVGRGSVDLVGIFEAEDKVPLANDTSIGSGHAPLSTLERLVLETERILNSRETKERLPAVGEDVKVMGVRDGKSITLTVAMAVVSSQVGSVSDYLAVKEEAESLILDLASRIAPDYDVRVNINTGDIPEKKILYLTVTGTSAEHGDDGATGRGNRVNGLITPMRPMSMEAAAGKNPVNHVGKIYNVVANEMAALIHREVKGVEEVYVKLVSQIGKPIDRPRIVDVKVRMEGGREVTADAKREIEAIANSVLDGITGYTEKLVRGDITVY.

Residue 140–145 (GRGSVD) participates in ATP binding.

Belongs to the AdoMet synthase 2 family. Mg(2+) is required as a cofactor.

It catalyses the reaction L-methionine + ATP + H2O = S-adenosyl-L-methionine + phosphate + diphosphate. The protein operates within amino-acid biosynthesis; S-adenosyl-L-methionine biosynthesis; S-adenosyl-L-methionine from L-methionine: step 1/1. Functionally, catalyzes the formation of S-adenosylmethionine from methionine and ATP. The chain is S-adenosylmethionine synthase (mat) from Aeropyrum pernix (strain ATCC 700893 / DSM 11879 / JCM 9820 / NBRC 100138 / K1).